A 99-amino-acid polypeptide reads, in one-letter code: N(2)-fixation sustaining protein CowN (99 aa).

This sequence belongs to the CowN family.

Is required to sustain N(2)-dependent growth in the presence of low levels of carbon monoxide (CO). Probably acts by protecting the N(2) fixation ability of the nitrogenase complex, which is inactivated in the presence of CO. This Magnetococcus marinus (strain ATCC BAA-1437 / JCM 17883 / MC-1) protein is N(2)-fixation sustaining protein CowN.